A 131-amino-acid polypeptide reads, in one-letter code: Small ribosomal subunit protein bS6 (131 aa).

Residues V96 to E131 are disordered. Residues K104 to F116 are compositionally biased toward basic and acidic residues. A compositionally biased stretch (acidic residues) spans T120 to E131.

Belongs to the bacterial ribosomal protein bS6 family.

Binds together with bS18 to 16S ribosomal RNA. The sequence is that of Small ribosomal subunit protein bS6 from Salmonella arizonae (strain ATCC BAA-731 / CDC346-86 / RSK2980).